The sequence spans 362 residues: Peptide chain release factor 1 (362 aa).

Position 240 is an N5-methylglutamine (Gln240).

It belongs to the prokaryotic/mitochondrial release factor family. Post-translationally, methylated by PrmC. Methylation increases the termination efficiency of RF1.

Its subcellular location is the cytoplasm. In terms of biological role, peptide chain release factor 1 directs the termination of translation in response to the peptide chain termination codons UAG and UAA. The protein is Peptide chain release factor 1 of Bifidobacterium longum subsp. infantis (strain ATCC 15697 / DSM 20088 / JCM 1222 / NCTC 11817 / S12).